The following is a 543-amino-acid chain: Cytochrome P450 monooxygenase sphH (543 aa).

2 helical membrane-spanning segments follow: residues 1-21 (MGPIHNYFGVVCLGIAASVYF) and 32-52 (IATFAVLLTGIAISKLLYQLF). Residue Cys487 coordinates heme.

This sequence belongs to the cytochrome P450 family. Heme serves as cofactor.

It is found in the membrane. The enzyme catalyses presphingofungin + 2 reduced [NADPH--hemoprotein reductase] + O2 = sphingofungin B1 + 2 oxidized [NADPH--hemoprotein reductase] + H2O + 2 H(+). The protein operates within secondary metabolite biosynthesis. Cytochrome P450 monooxygenase; part of the gene cluster that mediates the biosynthesis of sphingofungins, bioactive molecules acting as sphingolipid inhibitors via inhibiting serine palmitoyl transferase (SPT). Within the pathway, sphH catalyzes the conversion of presphingofungin into sphingofungin B1 via hydroxylagtion at position C-14. Sphingofungin biosynthesis starts with the PKS sphB that produces an C18 polyketide precursor 3-hydroxyoctadeca-4,10-dienoyl-ACP containing one delta-6 desaturation and one delta-12 desaturation. The aminoacyl transferase sphA uses the sphB product to produce 3-keto-presphingofungin by adding an aminomalonate molecule. SphF then reduces the C-3 ketone of 3-keto-presphingofungin which leads to presphingofungin. The cytochrome P450 monooxygenase sphH converts presphingofungin into sphingofungin B1 which is further converted to sphingofungin B by the dioxygenase sphC. SphC is also able to convert presphingofungin into sphingofungin B2. The acetyltransferase sphE acetylates sphingofungin B to produce sphingofungin C, but can also convert sphingofungin B1 into sphingofungin C1 and sphingofungin B2 into sphingofungin C2. Finally, sphingofungin C can be spontaneously converted into sphingofungin D. The protein is Cytochrome P450 monooxygenase sphH of Aspergillus fumigatus (strain CBS 144.89 / FGSC A1163 / CEA10) (Neosartorya fumigata).